The primary structure comprises 227 residues: Cytochrome c oxidase subunit 2 (227 aa).

Residues 1 to 14 (MAYPFQLGLQDATS) are Mitochondrial intermembrane-facing. A helical membrane pass occupies residues 15–45 (PIMEELTNFHDHTLMIVFLISTLVLYIISLM). Over 46–59 (LTTKLTHTSTMDAQ) the chain is Mitochondrial matrix. The chain crosses the membrane as a helical span at residues 60–87 (EVETIWTILPAVILILIALPSLRILYMM). Over 88–227 (DEINNPALTV…YFEDWSASMI (140 aa)) the chain is Mitochondrial intermembrane. Positions 161, 196, 198, 200, 204, and 207 each coordinate Cu cation. A Mg(2+)-binding site is contributed by Glu-198. Tyr-218 is subject to Phosphotyrosine.

Belongs to the cytochrome c oxidase subunit 2 family. Component of the cytochrome c oxidase (complex IV, CIV), a multisubunit enzyme composed of 14 subunits. The complex is composed of a catalytic core of 3 subunits MT-CO1, MT-CO2 and MT-CO3, encoded in the mitochondrial DNA, and 11 supernumerary subunits COX4I, COX5A, COX5B, COX6A, COX6B, COX6C, COX7A, COX7B, COX7C, COX8 and NDUFA4, which are encoded in the nuclear genome. The complex exists as a monomer or a dimer and forms supercomplexes (SCs) in the inner mitochondrial membrane with NADH-ubiquinone oxidoreductase (complex I, CI) and ubiquinol-cytochrome c oxidoreductase (cytochrome b-c1 complex, complex III, CIII), resulting in different assemblies (supercomplex SCI(1)III(2)IV(1) and megacomplex MCI(2)III(2)IV(2)). Found in a complex with TMEM177, COA6, COX18, COX20, SCO1 and SCO2. Interacts with TMEM177 in a COX20-dependent manner. Interacts with COX20. Interacts with COX16. Cu cation serves as cofactor.

The protein resides in the mitochondrion inner membrane. It catalyses the reaction 4 Fe(II)-[cytochrome c] + O2 + 8 H(+)(in) = 4 Fe(III)-[cytochrome c] + 2 H2O + 4 H(+)(out). In terms of biological role, component of the cytochrome c oxidase, the last enzyme in the mitochondrial electron transport chain which drives oxidative phosphorylation. The respiratory chain contains 3 multisubunit complexes succinate dehydrogenase (complex II, CII), ubiquinol-cytochrome c oxidoreductase (cytochrome b-c1 complex, complex III, CIII) and cytochrome c oxidase (complex IV, CIV), that cooperate to transfer electrons derived from NADH and succinate to molecular oxygen, creating an electrochemical gradient over the inner membrane that drives transmembrane transport and the ATP synthase. Cytochrome c oxidase is the component of the respiratory chain that catalyzes the reduction of oxygen to water. Electrons originating from reduced cytochrome c in the intermembrane space (IMS) are transferred via the dinuclear copper A center (CU(A)) of subunit 2 and heme A of subunit 1 to the active site in subunit 1, a binuclear center (BNC) formed by heme A3 and copper B (CU(B)). The BNC reduces molecular oxygen to 2 water molecules using 4 electrons from cytochrome c in the IMS and 4 protons from the mitochondrial matrix. In Hybomys univittatus (Peter's striped mouse), this protein is Cytochrome c oxidase subunit 2 (MT-CO2).